The primary structure comprises 361 residues: Holliday junction branch migration complex subunit RuvB (361 aa).

Residues M1–Y183 are large ATPase domain (RuvB-L). Residues L22, R23, G64, K67, T68, T69, E130 to F132, R173, Y183, and R220 each bind ATP. T68 serves as a coordination point for Mg(2+). A small ATPAse domain (RuvB-S) region spans residues S184 to E254. The tract at residues K257–Q361 is head domain (RuvB-H). DNA is bound by residues R312 and R317.

Belongs to the RuvB family. In terms of assembly, homohexamer. Forms an RuvA(8)-RuvB(12)-Holliday junction (HJ) complex. HJ DNA is sandwiched between 2 RuvA tetramers; dsDNA enters through RuvA and exits via RuvB. An RuvB hexamer assembles on each DNA strand where it exits the tetramer. Each RuvB hexamer is contacted by two RuvA subunits (via domain III) on 2 adjacent RuvB subunits; this complex drives branch migration. In the full resolvosome a probable DNA-RuvA(4)-RuvB(12)-RuvC(2) complex forms which resolves the HJ.

The protein localises to the cytoplasm. It carries out the reaction ATP + H2O = ADP + phosphate + H(+). In terms of biological role, the RuvA-RuvB-RuvC complex processes Holliday junction (HJ) DNA during genetic recombination and DNA repair, while the RuvA-RuvB complex plays an important role in the rescue of blocked DNA replication forks via replication fork reversal (RFR). RuvA specifically binds to HJ cruciform DNA, conferring on it an open structure. The RuvB hexamer acts as an ATP-dependent pump, pulling dsDNA into and through the RuvAB complex. RuvB forms 2 homohexamers on either side of HJ DNA bound by 1 or 2 RuvA tetramers; 4 subunits per hexamer contact DNA at a time. Coordinated motions by a converter formed by DNA-disengaged RuvB subunits stimulates ATP hydrolysis and nucleotide exchange. Immobilization of the converter enables RuvB to convert the ATP-contained energy into a lever motion, pulling 2 nucleotides of DNA out of the RuvA tetramer per ATP hydrolyzed, thus driving DNA branch migration. The RuvB motors rotate together with the DNA substrate, which together with the progressing nucleotide cycle form the mechanistic basis for DNA recombination by continuous HJ branch migration. Branch migration allows RuvC to scan DNA until it finds its consensus sequence, where it cleaves and resolves cruciform DNA. This is Holliday junction branch migration complex subunit RuvB from Pseudarthrobacter chlorophenolicus (strain ATCC 700700 / DSM 12829 / CIP 107037 / JCM 12360 / KCTC 9906 / NCIMB 13794 / A6) (Arthrobacter chlorophenolicus).